The sequence spans 687 residues: UvrABC system protein B (687 aa).

One can recognise a Helicase ATP-binding domain in the interval 26–414 (EGLAAGEMYQ…GAVIEQVVRP (389 aa)). 39 to 46 (GVTGSGKT) contacts ATP. Residues 92-115 (YYDYYQPEAYVPASDTYIGKDASV) carry the Beta-hairpin motif. The Helicase C-terminal domain occupies 430 to 596 (QVDDLLSEIR…GIQKAVREII (167 aa)). A UVR domain is found at 630 to 665 (AKRLQQLERQMHKHAQNLEFEQAARLRDEIKRIKGW).

It belongs to the UvrB family. In terms of assembly, forms a heterotetramer with UvrA during the search for lesions. Interacts with UvrC in an incision complex.

The protein localises to the cytoplasm. In terms of biological role, the UvrABC repair system catalyzes the recognition and processing of DNA lesions. A damage recognition complex composed of 2 UvrA and 2 UvrB subunits scans DNA for abnormalities. Upon binding of the UvrA(2)B(2) complex to a putative damaged site, the DNA wraps around one UvrB monomer. DNA wrap is dependent on ATP binding by UvrB and probably causes local melting of the DNA helix, facilitating insertion of UvrB beta-hairpin between the DNA strands. Then UvrB probes one DNA strand for the presence of a lesion. If a lesion is found the UvrA subunits dissociate and the UvrB-DNA preincision complex is formed. This complex is subsequently bound by UvrC and the second UvrB is released. If no lesion is found, the DNA wraps around the other UvrB subunit that will check the other stand for damage. The sequence is that of UvrABC system protein B from Nitrosococcus oceani (strain ATCC 19707 / BCRC 17464 / JCM 30415 / NCIMB 11848 / C-107).